Here is a 384-residue protein sequence, read N- to C-terminus: Autophagy-related protein 25 (384 aa).

2 coiled-coil regions span residues Lys-132–Ser-236 and Lys-342–Thr-379. Residues Glu-224–Arg-247 are disordered. The segment covering Ser-236 to Arg-247 has biased composition (basic and acidic residues).

Belongs to the ADIP family.

It is found in the preautophagosomal structure membrane. Specifically required for selective degradation of peroxisomes via macropexophagy. This Pichia angusta (Yeast) protein is Autophagy-related protein 25 (ATG25).